The chain runs to 747 residues: Protein neuralized (747 aa).

The NHR 1 domain occupies 97–251; sequence PLQFHTVHGD…NCTGIEFLDA (155 aa). Residues 280–292 are compositionally biased toward low complexity; the sequence is LPQQQQQLPQQQL. Residues 280–309 are disordered; the sequence is LPQQQQQLPQQQLTAHHPLQQSRRSLPGGT. In terms of domain architecture, NHR 2 spans 359–514; the sequence is PVPFHITKGR…STQSLRMFRQ (156 aa). The RING-type zinc-finger motif lies at 694-735; sequence CTICYENPIDSVLYMCGHMCMCYDCAIEQWRGVGGGQCPLCR.

The protein localises to the nucleus. Involved in neurogenesis. Interacts with other neurogenic proteins in the specification of the neuroblast versus epidermoblast cell fate. The chain is Protein neuralized (neur) from Drosophila virilis (Fruit fly).